Reading from the N-terminus, the 383-residue chain is Trihelix transcription factor ASIL1 (383 aa).

4 disordered regions span residues 1 to 32 (MEDDDEIQSIPSPGDSSLSPQAPPSPPILPTN), 61 to 94 (HTPSVTGGGGSGNRNGRGGGGGSGGGGGGRDDCW), 189 to 295 (IASS…SGVG), and 346 to 383 (EITQNNQEEEERSRQRGERRIVDDDDDRNGKNNGNVSS). Over residues 66–88 (TGGGGSGNRNGRGGGGGSGGGGG) the composition is skewed to gly residues. Residues 94-153 (WSEEATKVLIEAWGDRFSEPGKGTLKQQHWKEVAEIVNKSRQCKYPKTDIQCKNRIDTVK) form the Myb-like domain. Positions 206 to 225 (NSRSSMFKRQTKGNQIVQQQ) are enriched in polar residues. The span at 226–235 (QEKRGSDSMR) shows a compositional bias: basic and acidic residues. Residues 228–241 (KRGSDSMRWHFRKR) carry the Bipartite nuclear localization signal motif. The span at 246–262 (TESESDPEPEASPEESA) shows a compositional bias: acidic residues. The span at 263–274 (ESLPPLQPIQPL) shows a compositional bias: low complexity. Residues 304–365 (FTEAYEKAET…ERSRQRGERR (62 aa)) adopt a coiled-coil conformation. Basic and acidic residues predominate over residues 356-367 (ERSRQRGERRIV).

The protein localises to the nucleus. Its function is as follows. Transcription repressor that binds specific DNA sequence such as the GT-box-like motif 5'-CGTGATT-3' in the AT2S3 promoter. Negative regulator of seed maturation genes during seed germination and seedling development. May target GT-box-containing embryonic genes by competing with the binding of transcriptional activators to this promoter region. Contributes to the maintenance and control of seed filling and may repress the maturation program during early embryogenesis. The protein is Trihelix transcription factor ASIL1 of Arabidopsis thaliana (Mouse-ear cress).